A 354-amino-acid chain; its full sequence is Probable DNA repair protein RAD51 homolog 4 (354 aa).

Position 115–122 (115–122) interacts with ATP; sequence GNTSCGKT.

The protein belongs to the RecA family. RAD51 subfamily.

It localises to the nucleus. Functionally, involved in the homologous recombination repair (HRR) pathway of double-stranded DNA breaks arising during DNA replication or induced by DNA-damaging agents. This chain is Probable DNA repair protein RAD51 homolog 4 (rad51d), found in Dictyostelium discoideum (Social amoeba).